A 207-amino-acid chain; its full sequence is Guanylate kinase (207 aa).

The Guanylate kinase-like domain maps to 4–184 (GTLYIVSAPS…ALMDFKAILR (181 aa)). Residue 11–18 (APSGAGKS) coordinates ATP.

Belongs to the guanylate kinase family.

The protein localises to the cytoplasm. The catalysed reaction is GMP + ATP = GDP + ADP. In terms of biological role, essential for recycling GMP and indirectly, cGMP. The protein is Guanylate kinase of Vibrio parahaemolyticus serotype O3:K6 (strain RIMD 2210633).